The primary structure comprises 303 residues: Putative 1-phosphofructokinase (303 aa).

ATP contacts are provided by residues 217–222 (SDGDKG) and 249–250 (GD). D250 serves as the catalytic Proton acceptor.

Belongs to the carbohydrate kinase PfkB family.

The catalysed reaction is beta-D-fructose 1-phosphate + ATP = beta-D-fructose 1,6-bisphosphate + ADP + H(+). Catalyzes the ATP-dependent phosphorylation of fructose-l-phosphate to fructose-l,6-bisphosphate. This is Putative 1-phosphofructokinase (fruK) from Mycoplasma genitalium (strain ATCC 33530 / DSM 19775 / NCTC 10195 / G37) (Mycoplasmoides genitalium).